Consider the following 389-residue polypeptide: uncharacterized protein (389 aa).

Positions 1 to 12 (MVHATSQSASTE) are enriched in polar residues. Disordered stretches follow at residues 1 to 49 (MVHA…DEDL) and 86 to 111 (HKSMGSTRGKKKRGKTAKKAKKANRA). Positions 40–49 (ESGDEYDEDL) are enriched in acidic residues. A compositionally biased stretch (basic residues) spans 93 to 110 (RGKKKRGKTAKKAKKANR).

This is an uncharacterized protein from Caenorhabditis elegans.